Reading from the N-terminus, the 358-residue chain is NADH-quinone oxidoreductase subunit H (358 aa).

The next 8 helical transmembrane spans lie at 30 to 50, 96 to 116, 129 to 149, 168 to 188, 201 to 221, 265 to 285, 297 to 317, and 336 to 356; these read VVIGVCIVALYAILAILLIYM, FLYNLAPFMVIIASFLTFSCL, VGVFFLLAASSIGVVGILLAG, IISYELSVGLSILTMVVLMGT, GWFIFKGHIPALIAFVIYLIA, FIVAAVAATIFLGGWMPLHIV, IPGFIWFFGKAFFVVFLLMWI, and YLVPISMVNLVIMVLIVVFGL.

This sequence belongs to the complex I subunit 1 family. As to quaternary structure, NDH-1 is composed of 14 different subunits. Subunits NuoA, H, J, K, L, M, N constitute the membrane sector of the complex.

The protein resides in the cell inner membrane. The catalysed reaction is a quinone + NADH + 5 H(+)(in) = a quinol + NAD(+) + 4 H(+)(out). In terms of biological role, NDH-1 shuttles electrons from NADH, via FMN and iron-sulfur (Fe-S) centers, to quinones in the respiratory chain. The immediate electron acceptor for the enzyme in this species is believed to be ubiquinone. Couples the redox reaction to proton translocation (for every two electrons transferred, four hydrogen ions are translocated across the cytoplasmic membrane), and thus conserves the redox energy in a proton gradient. This subunit may bind ubiquinone. The protein is NADH-quinone oxidoreductase subunit H of Bacteroides fragilis (strain ATCC 25285 / DSM 2151 / CCUG 4856 / JCM 11019 / LMG 10263 / NCTC 9343 / Onslow / VPI 2553 / EN-2).